Consider the following 242-residue polypeptide: Uridylate kinase (242 aa).

Position 15–18 (15–18 (KLSG)) interacts with ATP. Gly-57 lines the UMP pocket. ATP contacts are provided by Gly-58 and Arg-62. Residues Asp-78 and 139–146 (TGNPFFTT) contribute to the UMP site. ATP-binding residues include Thr-166, Tyr-172, and Asp-175.

Belongs to the UMP kinase family. In terms of assembly, homohexamer.

The protein resides in the cytoplasm. The catalysed reaction is UMP + ATP = UDP + ADP. It functions in the pathway pyrimidine metabolism; CTP biosynthesis via de novo pathway; UDP from UMP (UMPK route): step 1/1. Inhibited by UTP. Its function is as follows. Catalyzes the reversible phosphorylation of UMP to UDP. The sequence is that of Uridylate kinase from Acinetobacter baylyi (strain ATCC 33305 / BD413 / ADP1).